We begin with the raw amino-acid sequence, 853 residues long: Neural cell adhesion molecule 1 (853 aa).

Positions 1 to 19 are cleaved as a signal peptide; it reads MLQTKNLIWTLFFLGTAVS. Ig-like C2-type domains lie at 20–111, 116–205, 212–300, 307–412, and 415–500; these read LQVD…ATVN, QKLM…KDIQ, PTVQ…ASIH, PKIT…LEVQ, and PKLQ…ESLE. Over 20–719 the chain is Extracellular; the sequence is LQVDIVPSQG…NGSPTSGLST (700 aa). 2 disulfide bridges follow: Cys-41–Cys-96 and Cys-139–Cys-189. Heparin is bound by residues 152–156 and 161–165; these read KHKGR and KKDVR. Asn-222 is a glycosylation site (N-linked (GlcNAc...) asparagine). Cys-235 and Cys-286 are joined by a disulfide. N-linked (GlcNAc...) asparagine glycosylation is found at Asn-314, Asn-346, Asn-432, Asn-458, and Asn-487. Cys-328 and Cys-394 form a disulfide bridge. Cys-435 and Cys-488 are oxidised to a cystine. Fibronectin type-III domains are found at residues 508 to 607 and 609 to 704; these read TPSS…TQPV and EPSA…SAQP. A helical transmembrane segment spans residues 720–737; it reads GAIVGILVVTFVLLLVAV. At 738–853 the chain is on the cytoplasmic side; it reads DVTCYFLNKC…TQIKVNESKA (116 aa). The tract at residues 764–853 is disordered; it reads GAKGKDMEEG…TQIKVNESKA (90 aa). Basic and acidic residues-rich tracts occupy residues 766–807 and 815–829; these read KGKD…HTEP and EPEK…ETET. Phosphoserine occurs at positions 778 and 782. Polar residues predominate over residues 838–853; that stretch reads TVPNDATQIKVNESKA.

Interacts with MDK. Found in a complex with SLC39A6, SLC39A10 and with NCAM1; this complex controls NCAM1 phosphorylation and integration into focal adhesion complexes during epithelial-tomesenchymal transition. Interacts with synaptic plasticity regulator PANTS. Polysialylated by ST8SIA2 and ST8SIA4. Polysialylation modulates cell interactions by confering both attractive and repulsive properties that are highly regulated by ST8SIA2 and ST8SIA4. Polysialylation is formed on a-2,3-linked sialic acid of core glycans.

It localises to the cell membrane. Functionally, this protein is a cell adhesion molecule involved in neuron-neuron adhesion, neurite fasciculation, outgrowth of neurites, etc. This Bos taurus (Bovine) protein is Neural cell adhesion molecule 1.